The chain runs to 104 residues: Replication restart protein PriB (104 aa).

In terms of domain architecture, SSB spans 1 to 101; sequence MTNRLTLSGT…LHAEQIELID (101 aa).

It belongs to the PriB family. In terms of assembly, homodimer. Interacts with PriA and DnaT. Component of the replication restart primosome. Primosome assembly occurs via a 'hand-off' mechanism. PriA binds to replication forks, subsequently PriB then DnaT bind; DnaT then displaces ssDNA to generate the helicase loading substrate.

Functionally, involved in the restart of stalled replication forks, which reloads the replicative helicase on sites other than the origin of replication; the PriA-PriB pathway is the major replication restart pathway. During primosome assembly it facilitates complex formation between PriA and DnaT on DNA; stabilizes PriA on DNA. Stimulates the DNA unwinding activity of PriA helicase. This is Replication restart protein PriB from Salmonella typhi.